The primary structure comprises 397 residues: Kappa-carrageenase (397 aa).

Residues 1–25 (MKPISIVAFPIPAISMLLLSAVSQA) form the signal peptide. In terms of domain architecture, GH16 spans 26 to 299 (ASMQPPIAKP…YVRTWVKVGN (274 aa)). Cys98 and Cys268 are joined by a disulfide. Catalysis depends on Glu163, which acts as the Nucleophile. Asp165 is an active-site residue. Glu168 functions as the Proton donor in the catalytic mechanism. In terms of domain architecture, BIG2 spans 316-387 (AVNSVQLSAA…TITVKTKNKG (72 aa)).

It belongs to the glycosyl hydrolase 16 family.

The protein localises to the periplasm. It catalyses the reaction Endohydrolysis of (1-&gt;4)-beta-D-linkages between D-galactose 4-sulfate and 3,6-anhydro-D-galactose in kappa-carrageenans.. This chain is Kappa-carrageenase (cgkA), found in Pseudoalteromonas carrageenovora (Alteromonas carrageenovora).